A 437-amino-acid chain; its full sequence is Succinyl-CoA:cyclohexane-1-carboxylate CoA transferase (437 aa).

221-225 provides a ligand contact to CoA; the sequence is GWGGI. The active-site 5-glutamyl coenzyme A thioester intermediate is the Glu244. Residues Leu319, Gly342, and Lys367 each coordinate CoA.

This sequence belongs to the acetyl-CoA hydrolase/transferase family. Homodimer.

The catalysed reaction is cyclohexane-1-carboxylate + succinyl-CoA = cyclohexane-1-carbonyl-CoA + succinate. It catalyses the reaction cyclohexane-1-carboxylate + butanoyl-CoA = cyclohexane-1-carbonyl-CoA + butanoate. Functionally, acyl-CoA transferase involved in the anaerobic degradation of cyclohexane carboxylic acid (CHC). Catalyzes the activation of CHC to cyclohexane-1-carbonyl-CoA (CHCoA). Benzoic acid and cyclohex-1-ene-1-carboxylic acid can also be used as substrates, but with lower specific activity. Shows highest activity with succinyl-CoA and butanoyl-coA as a CoA donor, and lower activity with crotonyl-CoA, acetyl-CoA, glutaryl-CoA, CH1eneCoA, propionyl-CoA and acetoacetyl-CoA. In vitro, the enzyme can use butanoyl-coA as a CoA donor with greater efficiency than succinyl-CoA. However, succinyl-CoA is the most abundant CoA ester in exponentially grown cells, whereas butanoyl-coA is hardly detectable, indicating that succinyl-CoA is the natural CoA donor for CHC activation. The polypeptide is Succinyl-CoA:cyclohexane-1-carboxylate CoA transferase (Geobacter metallireducens (strain ATCC 53774 / DSM 7210 / GS-15)).